The sequence spans 246 residues: Phosphomannomutase (246 aa).

The active-site Nucleophile is Asp-13. Asp-13 and Asp-15 together coordinate Mg(2+). Residue Asp-15 is the Proton donor/acceptor of the active site. Arg-22, Arg-124, Arg-135, Arg-142, Ser-180, and Asp-182 together coordinate alpha-D-mannose 1-phosphate. Positions 208, 220, and 225 each coordinate Mg(2+).

Belongs to the eukaryotic PMM family. Homodimer. Mg(2+) is required as a cofactor. As to expression, expressed in roots, stems, leaves, flowers and immature fruits.

The protein localises to the cytoplasm. The catalysed reaction is alpha-D-mannose 1-phosphate = D-mannose 6-phosphate. The protein operates within nucleotide-sugar biosynthesis; GDP-alpha-D-mannose biosynthesis; alpha-D-mannose 1-phosphate from D-fructose 6-phosphate: step 2/2. Its function is as follows. Catalyzes the interconversion of mannose-6-phosphate to mannose-1-phosphate, the precursor for the synthesis of GDP-mannose. GDP-mannose is an essential sugar nucleotide for the synthesis of D-mannose-containing cell wall polysaccharides (galactomannans and glucomannans), glycolipids, glycoproteins and the antioxidant L-ascorbate. Can complement the yeast temperature-sensitive mutant sec53-6. This chain is Phosphomannomutase, found in Arabidopsis thaliana (Mouse-ear cress).